The following is a 124-amino-acid chain: Small ribosomal subunit protein uS12 (124 aa).

A 3-methylthioaspartic acid modification is found at Asp-89. Lys-108 carries the post-translational modification N6-acetyllysine.

This sequence belongs to the universal ribosomal protein uS12 family. As to quaternary structure, part of the 30S ribosomal subunit. Contacts proteins S8 and S17. May interact with IF1 in the 30S initiation complex.

With S4 and S5 plays an important role in translational accuracy. Functionally, interacts with and stabilizes bases of the 16S rRNA that are involved in tRNA selection in the A site and with the mRNA backbone. Located at the interface of the 30S and 50S subunits, it traverses the body of the 30S subunit contacting proteins on the other side and probably holding the rRNA structure together. The combined cluster of proteins S8, S12 and S17 appears to hold together the shoulder and platform of the 30S subunit. The polypeptide is Small ribosomal subunit protein uS12 (Escherichia coli O6:K15:H31 (strain 536 / UPEC)).